The sequence spans 129 residues: Fluoride-specific ion channel FluC (129 aa).

4 helical membrane-spanning segments follow: residues 10–30 (LLVG…ALAF), 35–55 (PGFP…IGFL), 71–91 (LFLV…MFEG), and 105–125 (LYLA…IIAA). Residues Gly79 and Thr82 each contribute to the Na(+) site.

It belongs to the fluoride channel Fluc/FEX (TC 1.A.43) family.

It is found in the cell inner membrane. It catalyses the reaction fluoride(in) = fluoride(out). Its activity is regulated as follows. Na(+) is not transported, but it plays an essential structural role and its presence is essential for fluoride channel function. Its function is as follows. Fluoride-specific ion channel. Important for reducing fluoride concentration in the cell, thus reducing its toxicity. The sequence is that of Fluoride-specific ion channel FluC from Chlorobium luteolum (strain DSM 273 / BCRC 81028 / 2530) (Pelodictyon luteolum).